A 196-amino-acid chain; its full sequence is ATP-dependent Clp protease proteolytic subunit (196 aa).

Residue S99 is the Nucleophile of the active site. H124 is an active-site residue.

The protein belongs to the peptidase S14 family. Fourteen ClpP subunits assemble into 2 heptameric rings which stack back to back to give a disk-like structure with a central cavity, resembling the structure of eukaryotic proteasomes.

It localises to the cytoplasm. It catalyses the reaction Hydrolysis of proteins to small peptides in the presence of ATP and magnesium. alpha-casein is the usual test substrate. In the absence of ATP, only oligopeptides shorter than five residues are hydrolyzed (such as succinyl-Leu-Tyr-|-NHMec, and Leu-Tyr-Leu-|-Tyr-Trp, in which cleavage of the -Tyr-|-Leu- and -Tyr-|-Trp bonds also occurs).. Functionally, cleaves peptides in various proteins in a process that requires ATP hydrolysis. Has a chymotrypsin-like activity. Plays a major role in the degradation of misfolded proteins. The protein is ATP-dependent Clp protease proteolytic subunit of Helicobacter pylori (strain ATCC 700392 / 26695) (Campylobacter pylori).